The following is a 451-amino-acid chain: Alpha-galactosidase (451 aa).

Residue 5–71 (PKITFIGAGS…ASGKITCHTQ (67 aa)) coordinates NAD(+). N151 contacts substrate. C173 provides a ligand contact to Mn(2+). The active-site Proton donor is the H174. A Mn(2+)-binding site is contributed by H203. R287 contacts substrate.

The protein belongs to the glycosyl hydrolase 4 family. In terms of assembly, homodimer. It depends on NAD(+) as a cofactor. Mn(2+) serves as cofactor.

The catalysed reaction is Hydrolysis of terminal, non-reducing alpha-D-galactose residues in alpha-D-galactosides, including galactose oligosaccharides, galactomannans and galactolipids.. The sequence is that of Alpha-galactosidase (melA) from Escherichia coli (strain K12).